Reading from the N-terminus, the 359-residue chain is Protein Wnt-5b (359 aa).

An N-terminal signal peptide occupies residues 1–17; that stretch reads MPSLLLLFTAALLSSWA. Residues Cys-83 and Cys-94 are joined by a disulfide bond. N-linked (GlcNAc...) asparagine glycosylation is found at Asn-93 and Asn-99. Intrachain disulfides connect Cys-133–Cys-141, Cys-143–Cys-161, Cys-217–Cys-231, Cys-219–Cys-226, Cys-288–Cys-319, Cys-304–Cys-314, Cys-318–Cys-358, Cys-334–Cys-349, Cys-336–Cys-346, and Cys-341–Cys-342. Ser-223 carries the O-palmitoleoyl serine; by PORCN lipid modification. 2 N-linked (GlcNAc...) asparagine glycosylation sites follow: Asn-291 and Asn-305.

The protein belongs to the Wnt family. Interacts with PORCN. Post-translationally, palmitoleoylation is required for efficient binding to frizzled receptors. Depalmitoleoylation leads to Wnt signaling pathway inhibition.

The protein localises to the secreted. Its subcellular location is the extracellular space. The protein resides in the extracellular matrix. Functionally, ligand for members of the frizzled family of seven transmembrane receptors. Probable developmental protein. May be a signaling molecule which affects the development of discrete regions of tissues. Is likely to signal over only few cell diameters. This Pongo abelii (Sumatran orangutan) protein is Protein Wnt-5b (WNT5B).